The following is an 87-amino-acid chain: MAYVKATAILPEKLISEIQKYVQGKTIYIPKPESSHQKWGACSGTRKLIDDRNASIKKAFKNGKTIHQLSDEYHLSIETIKKIVYSK.

This is an uncharacterized protein from Bacillus subtilis (strain 168).